We begin with the raw amino-acid sequence, 348 residues long: GTP 3',8-cyclase (348 aa).

A Radical SAM core domain is found at 24–242 (PFGRAVTYLR…EKQFTLTDID (219 aa)). Arg-33 lines the GTP pocket. Cys-40 and Cys-44 together coordinate [4Fe-4S] cluster. Tyr-46 is an S-adenosyl-L-methionine binding site. Cys-47 provides a ligand contact to [4Fe-4S] cluster. Arg-82 is a binding site for GTP. Gly-86 lines the S-adenosyl-L-methionine pocket. Residue Thr-115 participates in GTP binding. Ser-139 is an S-adenosyl-L-methionine binding site. Lys-175 is a GTP binding site. Met-209 provides a ligand contact to S-adenosyl-L-methionine. [4Fe-4S] cluster is bound by residues Cys-272 and Cys-275. 277–279 (RVR) lines the GTP pocket. Cys-289 contacts [4Fe-4S] cluster.

It belongs to the radical SAM superfamily. MoaA family. Monomer and homodimer. [4Fe-4S] cluster serves as cofactor.

The catalysed reaction is GTP + AH2 + S-adenosyl-L-methionine = (8S)-3',8-cyclo-7,8-dihydroguanosine 5'-triphosphate + 5'-deoxyadenosine + L-methionine + A + H(+). It functions in the pathway cofactor biosynthesis; molybdopterin biosynthesis. Its function is as follows. Catalyzes the cyclization of GTP to (8S)-3',8-cyclo-7,8-dihydroguanosine 5'-triphosphate. The chain is GTP 3',8-cyclase from Rhizobium leguminosarum bv. trifolii (strain WSM2304).